The following is a 324-amino-acid chain: NADH-cytochrome b5 reductase 2 (324 aa).

The chain crosses the membrane as a helical span at residues isoleucine 31–tyrosine 47. The 109-residue stretch at glutamine 70–glutamate 178 folds into the FAD-binding FR-type domain. Lysine 181–leucine 216 provides a ligand contact to FAD.

Belongs to the flavoprotein pyridine nucleotide cytochrome reductase family. FAD serves as cofactor.

The protein localises to the mitochondrion outer membrane. The enzyme catalyses 2 Fe(III)-[cytochrome b5] + NADH = 2 Fe(II)-[cytochrome b5] + NAD(+) + H(+). May mediate the reduction of outer membrane cytochrome b5. This Ajellomyces capsulatus (strain NAm1 / WU24) (Darling's disease fungus) protein is NADH-cytochrome b5 reductase 2 (MCR1).